We begin with the raw amino-acid sequence, 205 residues long: Beta-crystallin B2 (205 aa).

N-acetylalanine is present on alanine 2. An N-terminal arm region spans residues 2–16 (ASDHQTQAGKPQPLN). 2 Beta/gamma crystallin 'Greek key' domains span residues 17–56 (PKII…LVQA) and 57–101 (GPWV…RPIK). The connecting peptide stretch occupies residues 102 to 106 (VDSQE). 2 Beta/gamma crystallin 'Greek key' domains span residues 107–148 (HKII…RVQS) and 149–191 (GTWV…RRIR). The tract at residues 193 to 205 (MQWHQRGAFHPSS) is C-terminal arm.

The protein belongs to the beta/gamma-crystallin family. As to quaternary structure, homo/heterodimer, or complexes of higher-order. The structure of beta-crystallin oligomers seems to be stabilized through interactions between the N-terminal arms.

Functionally, crystallins are the dominant structural components of the vertebrate eye lens. This Mesocricetus auratus (Golden hamster) protein is Beta-crystallin B2 (CRYBB2).